The following is a 190-amino-acid chain: MAPKKDAKKPEPPKKAEPAPAPAPAPEPPKADAVDLSGVKLDFTQDQMEDYREAFLLFDRVGDSKVAYNQIADIMRALGQNPTNKEVTKILGNPTADDMVNKRVDFEGFLPMLQVVINNPNKATYDDYVEGLRVFDKEGNGTVMGAELRIVLSTLGEKMSEAEIDALMQGQEDENGCVNYEAFVKHIMSV.

Over residues 1-17 the composition is skewed to basic and acidic residues; sequence MAPKKDAKKPEPPKKAE. The segment at 1 to 33 is disordered; sequence MAPKKDAKKPEPPKKAEPAPAPAPAPEPPKADA. Pro residues predominate over residues 19–28; that stretch reads APAPAPAPEP. 2 consecutive EF-hand domains span residues 46 to 81 and 123 to 158; these read DQME…LGQN and ATYD…LGEK.

In terms of assembly, myosin is a hexamer of 2 heavy chains and 4 light chains. Does not bind calcium. Expressed in fast muscle fibers during skeletal muscle differentiation.

Its function is as follows. Non-regulatory myosin light chain required for proper formation and/or maintenance of myofibers, and thus appropriate muscle function. This chain is Myosin, light chain 1, alkali; skeletal, fast, found in Danio rerio (Zebrafish).